The chain runs to 728 residues: Catalase B (728 aa).

Residues H107 and N180 contribute to the active site. Y394 lines the heme pocket.

The protein belongs to the catalase family. It depends on heme as a cofactor.

It localises to the secreted. The enzyme catalyses 2 H2O2 = O2 + 2 H2O. In terms of biological role, occurs in almost all aerobically respiring organisms and serves to protect cells from the toxic effects of hydrogen peroxide. In Ajellomyces capsulatus (Darling's disease fungus), this protein is Catalase B (CATB).